Here is a 260-residue protein sequence, read N- to C-terminus: Phosphate import ATP-binding protein PstB (260 aa).

In terms of domain architecture, ABC transporter spans 13–255; it reads MRAQGVNVFY…PKQERTKDYI (243 aa). 45–52 serves as a coordination point for ATP; that stretch reads GPSGCGKS.

It belongs to the ABC transporter superfamily. Phosphate importer (TC 3.A.1.7) family. The complex is composed of two ATP-binding proteins (PstB), two transmembrane proteins (PstC and PstA) and a solute-binding protein (PstS).

Its subcellular location is the cell inner membrane. The catalysed reaction is phosphate(out) + ATP + H2O = ADP + 2 phosphate(in) + H(+). Its function is as follows. Part of the ABC transporter complex PstSACB involved in phosphate import. Responsible for energy coupling to the transport system. In Sphingopyxis alaskensis (strain DSM 13593 / LMG 18877 / RB2256) (Sphingomonas alaskensis), this protein is Phosphate import ATP-binding protein PstB.